The primary structure comprises 516 residues: Bifunctional purine biosynthesis protein PurH (516 aa).

The region spanning 1–150 is the MGS-like domain; it reads MSDDRKQIKR…KNHPSVAVVV (150 aa).

It belongs to the PurH family.

The catalysed reaction is (6R)-10-formyltetrahydrofolate + 5-amino-1-(5-phospho-beta-D-ribosyl)imidazole-4-carboxamide = 5-formamido-1-(5-phospho-D-ribosyl)imidazole-4-carboxamide + (6S)-5,6,7,8-tetrahydrofolate. The enzyme catalyses IMP + H2O = 5-formamido-1-(5-phospho-D-ribosyl)imidazole-4-carboxamide. Its pathway is purine metabolism; IMP biosynthesis via de novo pathway; 5-formamido-1-(5-phospho-D-ribosyl)imidazole-4-carboxamide from 5-amino-1-(5-phospho-D-ribosyl)imidazole-4-carboxamide (10-formyl THF route): step 1/1. It functions in the pathway purine metabolism; IMP biosynthesis via de novo pathway; IMP from 5-formamido-1-(5-phospho-D-ribosyl)imidazole-4-carboxamide: step 1/1. This is Bifunctional purine biosynthesis protein PurH from Corynebacterium ammoniagenes (Brevibacterium ammoniagenes).